The chain runs to 1156 residues: Condensin-2 complex subunit G2 (1156 aa).

The HEAT repeat unit spans residues 460–498 (MLPALKFCLHDNSEKVRVAFVDMLLKIKAVRAAKFWKIC). A disordered region spans residues 587–611 (PNEDTEDEDDDEGDGEGIVRGDSEK). The span at 589–601 (EDTEDEDDDEGDG) shows a compositional bias: acidic residues.

In terms of assembly, component of the condensin-2 complex, which contains the smc2 and smc4 heterodimer, and three non SMC subunits that probably regulate the complex: ncaph2, ncapd3 and ncapg2.

The protein localises to the nucleus. In terms of biological role, regulatory subunit of the condensin-2 complex, a complex which establishes mitotic chromosome architecture and is involved in physical rigidity of the chromatid axis. In Xenopus laevis (African clawed frog), this protein is Condensin-2 complex subunit G2 (ncapg2).